Consider the following 336-residue polypeptide: CMP-sialic acid transporter (336 aa).

The Cytoplasmic portion of the chain corresponds to Met-1 to Ser-9. Residues Leu-10–Ala-30 traverse the membrane as a helical segment. Over Leu-31 to Thr-45 the chain is Lumenal. A helical membrane pass occupies residues Thr-46–Ala-64. Lys-55 lines the CMP-N-acetyl-beta-neuraminate pocket. The Cytoplasmic portion of the chain corresponds to Lys-65–Glu-87. The chain crosses the membrane as a helical span at residues Leu-88–Ala-108. Gln-101–Asn-102 contributes to the CMP-N-acetyl-beta-neuraminate binding site. The Lumenal segment spans residues Leu-109–Ala-114. A helical transmembrane segment spans residues Ala-115–Met-135. Tyr-117 to Lys-124 lines the CMP-N-acetyl-beta-neuraminate pocket. Topologically, residues Leu-136–Ser-141 are cytoplasmic. A helical membrane pass occupies residues Lys-142–Trp-160. The Lumenal portion of the chain corresponds to Lys-161 to Leu-175. The helical transmembrane segment at Leu-176 to Glu-196 threads the bilayer. Ser-188 lines the CMP-N-acetyl-beta-neuraminate pocket. At Lys-197–Arg-209 the chain is on the cytoplasmic side. Asn-210–Tyr-214 serves as a coordination point for CMP-N-acetyl-beta-neuraminate. A helical transmembrane segment spans residues Asn-210–Ser-228. The Lumenal segment spans residues Asp-229 to Thr-243. A helical transmembrane segment spans residues Tyr-244–Val-262. Topologically, residues Val-263–Asn-269 are cytoplasmic. The chain crosses the membrane as a helical span at residues Ile-270–Val-288. Lys-272 provides a ligand contact to CMP-N-acetyl-beta-neuraminate. Residues Leu-289–Thr-296 are Lumenal-facing. A helical transmembrane segment spans residues Leu-297 to Leu-315. The Cytoplasmic portion of the chain corresponds to Pro-316 to Val-336. The segment at Pro-316–Val-336 is disordered.

Belongs to the nucleotide-sugar transporter family. SLC35A subfamily. In terms of assembly, monomer. In terms of tissue distribution, ubiquitous. Found in all the tissues examined including skeletal muscle, brain, heart, liver, kidney and spleen.

It is found in the golgi apparatus membrane. The enzyme catalyses CMP-N-acetyl-beta-neuraminate(in) + CMP(out) = CMP-N-acetyl-beta-neuraminate(out) + CMP(in). The catalysed reaction is CMP-N-acetyl-beta-neuraminate(in) + AMP(out) = CMP-N-acetyl-beta-neuraminate(out) + AMP(in). It catalyses the reaction CDP-L-ribitol(in) + CDP(out) = CDP-L-ribitol(out) + CDP(in). It carries out the reaction UMP(out) + CMP-N-acetyl-beta-neuraminate(in) = UMP(in) + CMP-N-acetyl-beta-neuraminate(out). In terms of biological role, transports CMP-sialic acid from the cytosol into the Golgi apparatus, functioning as an antiporter that exchanges CMP-sialic acid for CMP. Binds both CMP-sialic acid and free CMP, but has higher affinity for free CMP. Also able to exchange CMP-sialic acid for AMP and UMP. Also mediates the transport of CDP-ribitol. In Mus musculus (Mouse), this protein is CMP-sialic acid transporter.